The primary structure comprises 380 residues: Calreticulin-3 (380 aa).

The signal sequence occupies residues 1–19; sequence MVSARALLWAICVLRVALA. The N-domain stretch occupies residues 20–197; that stretch reads TVYFQEEFLD…GQSIESGSIE (178 aa). Residue Asn-42 is glycosylated (N-linked (GlcNAc...) asparagine). Residues Tyr-109, Lys-111, Tyr-128, and Asp-135 each contribute to the an alpha-D-glucoside site. Cys-137 and Cys-163 are disulfide-bonded. 7 tandem repeats follow at residues 191–202, 209–220, 222–231, 235–246, 250–256, 260–268, and 270–280. Residues 191–246 are 4 X approximate repeats; sequence IESGSIEYDWNLTSLRKTEKTSLDSRDWDQVEGSKVQDWEKHFLDAGASKPSDWNS. Positions 198–291 are P-domain; that stretch reads YDWNLTSLRK…YLTQYDLSEF (94 aa). A glycan (N-linked (GlcNAc...) asparagine) is linked at Asn-201. The 3 X approximate repeats stretch occupies residues 250-280; sequence GDWLQKPPYEDGLKAEGIDKDVWLHQKMRPA. The C-domain stretch occupies residues 292-380; it reads ENIGAIGLEL…FSRFHRQGEL (89 aa). Glu-300 is a binding site for an alpha-D-glucoside. The short motif at 377-380 is the Prevents secretion from ER element; sequence QGEL.

The protein belongs to the calreticulin family. As to quaternary structure, component of an EIF2 complex at least composed of CELF1/CUGBP1, CALR, CALR3, EIF2S1, EIF2S2, HSP90B1 and HSPA5. In terms of tissue distribution, testis specific, absent in mature sperm.

The protein resides in the endoplasmic reticulum lumen. CALR3 capacity for calcium-binding may be absent or much lower than that of CALR. During spermatogenesis, may act as a lectin-independent chaperone for specific client proteins such as ADAM3. Required for sperm fertility. The protein is Calreticulin-3 (Calr3) of Mus musculus (Mouse).